Reading from the N-terminus, the 556-residue chain is 2-isopropylmalate synthase (556 aa).

The Pyruvate carboxyltransferase domain occupies 33–307 (PIWLSSDLRD…DPQLDFSDID (275 aa)). The Mg(2+) site is built by Asp-42, His-246, His-248, and Asn-282. Residues 439–556 (ATAPYTLKGH…ALHQAQEAAA (118 aa)) form a regulatory domain region.

This sequence belongs to the alpha-IPM synthase/homocitrate synthase family. LeuA type 2 subfamily. Homodimer. It depends on Mg(2+) as a cofactor.

The protein localises to the cytoplasm. It catalyses the reaction 3-methyl-2-oxobutanoate + acetyl-CoA + H2O = (2S)-2-isopropylmalate + CoA + H(+). It participates in amino-acid biosynthesis; L-leucine biosynthesis; L-leucine from 3-methyl-2-oxobutanoate: step 1/4. Functionally, catalyzes the condensation of the acetyl group of acetyl-CoA with 3-methyl-2-oxobutanoate (2-ketoisovalerate) to form 3-carboxy-3-hydroxy-4-methylpentanoate (2-isopropylmalate). The protein is 2-isopropylmalate synthase of Stutzerimonas stutzeri (strain A1501) (Pseudomonas stutzeri).